Reading from the N-terminus, the 322-residue chain is tRNA-modifying protein YgfZ (322 aa).

Residue tryptophan 182 participates in folate binding.

This sequence belongs to the tRNA-modifying YgfZ family.

It is found in the cytoplasm. Its function is as follows. Folate-binding protein involved in regulating the level of ATP-DnaA and in the modification of some tRNAs. It is probably a key factor in regulatory networks that act via tRNA modification, such as initiation of chromosomal replication. The sequence is that of tRNA-modifying protein YgfZ from Vibrio campbellii (strain ATCC BAA-1116).